We begin with the raw amino-acid sequence, 490 residues long: Cell division cycle protein cdt2 (490 aa).

Residues 18–40 are disordered; sequence ITSRANNSLPPTPDSSPAAPSKK. WD repeat units lie at residues 178 to 208, 226 to 257, 285 to 317, 339 to 369, 387 to 419, and 435 to 464; these read AHNN…KVFD, YHSH…IFWD, GRDC…KLWD, KRDF…YEYS, RISS…GVVV, and GHTK…RVWN.

This sequence belongs to the WD repeat cdt2 family. In terms of assembly, component of the DCX(DTL) E3 ubiquitin ligase complex, at least composed of cul4, ddb1, cdt2 and pip1.

Its subcellular location is the nucleus. It functions in the pathway protein modification; protein ubiquitination. Its function is as follows. Substrate-specific adapter of a DCX (DDB1-CUL4-X-box) E3 ubiquitin-protein ligase complex required for DNA replication during mitosis and meiosis. The DCX(DTL) complex, also named CRL4(CDT2) complex, mediates the polyubiquitination and subsequent degradation of cdt1 and spd1. Involved in the regulation of mitotic and pre-meiotic S-phase progression. The sequence is that of Cell division cycle protein cdt2 (cdt2) from Schizosaccharomyces pombe (strain 972 / ATCC 24843) (Fission yeast).